A 674-amino-acid polypeptide reads, in one-letter code: Ribonuclease E (674 aa).

In terms of domain architecture, S1 motif spans 35 to 117 (GDIYLGLVDN…LTGNISMPGR (83 aa)). Mg(2+)-binding residues include D296 and D339. Positions 397 and 400 each coordinate Zn(2+). Disordered regions lie at residues 458–529 (PLDL…RRVE) and 626–674 (QPRE…SSAE). Composition is skewed to basic and acidic residues over residues 484–493 (GSEFSEKENI) and 509–529 (TKEK…RRVE). Positions 663 to 674 (RPGRRRRRSSAE) are enriched in basic residues. Positions 665-673 (GRRRRRSSA) match the C4 Arg-rich motif, probably responsible for interaction with PNPase motif.

Belongs to the RNase E/G family. As to quaternary structure, fractionates in a 250-300 kDa region, which is too small to be the equivalent of an RNA degradosome, as occurs with E.coli RNase E. Interacts with polynucleotide phosphorylase (PNPase, pnp), probably via the C4 Arg-rich motif (residues 665-673). Mg(2+) serves as cofactor.

It is found in the cytoplasm. The protein resides in the cell inner membrane. It catalyses the reaction Endonucleolytic cleavage of single-stranded RNA in A- and U-rich regions.. Its function is as follows. Endoribonuclease that plays a central role in rRNA processing and mRNA decay, and probably tRNA processing. Acts on 9S rRNA (the precursor of 5S rRNA) and RNAI, a molecule that controls the replication of ColE1 plasmid. Upon expression in E.coli does not purify with endogenous degradosome proteins. Prefers 5'-monophosphorylated substrates over 5'-triphosphorylated substrates. Complements an rne temperature-sensitive mutation in E.coli, despite being considerably shorter and not able to interact with the E.coli degradosome. Cleaves AU-rich sequences in vitro, tested with psbA2 mRNA. Complements both an rne temperature-sensitive mutation and an rng deletion in E.coli. Acts in the degradation of psaL mRNA in the presence but not the absence of the sRNA PsrR1. Cleaves the rimO-crhR transcript, contributing to the very short half-life of rimO mRNA. Functionally, mRNA for psbA2, one of the core proteins in photosystem II, is degraded in the dark under control of a cis-acting AU-rich box in its 5'-UTR. RNase E cuts in this box, suggesting it is involved in this dark-induced mRNA instability. CRISPR (clustered regularly interspaced short palindromic repeat) is an adaptive immune system that provides protection against mobile genetic elements (viruses, transposable elements and conjugative plasmids). CRISPR clusters contain spacers, sequences complementary to antecedent mobile elements, and target invading nucleic acids. CRISPR clusters are transcribed and processed into CRISPR RNA (crRNA). Endogenous RNase E is required for correct processing of pre-crRNA for the CRISPR3 subtype III-B system in this genome (genes sll7080 to sll7095). This CRISPR3 system does not include a cas6 gene, which is the usual RNase involved in crRNA maturation. The protein is Ribonuclease E of Synechocystis sp. (strain ATCC 27184 / PCC 6803 / Kazusa).